A 115-amino-acid chain; its full sequence is Meiotically up-regulated gene 106 protein (115 aa).

Positions 1–34 (MSIKVEWIKFTRLKKCATLLVQLSLLRYRYMVLA) are cleaved as a signal peptide. 2 helical membrane passes run 41–60 (CIVV…GALF) and 81–103 (GVKL…FTPY).

It is found in the membrane. Functionally, has a role in meiosis. The chain is Meiotically up-regulated gene 106 protein (mug106) from Schizosaccharomyces pombe (strain 972 / ATCC 24843) (Fission yeast).